A 329-amino-acid chain; its full sequence is MIKNILLLCGGGSSEHEISLLSANFVEQQLNLIQNVKVTRVEIKNEGWVTDQGELVYLDLNTKQLCSNESNQTIDFIVPCIHGFPGETGDIQSLFEIAGIPYLGCGPEASSNSFNKITSKLWYDALDIPNTPYLFLTRNDEHAHRQAEQAFEKWGKVFVKAARQGSSVGCYSVAEKQAIAKAVNDAFGYSDQVLVEKAVKPRELEVAAYEMNGELHITKPGEVIAPDGAFYSYDEKYSSSSHSLTEVEAKNLTQEQIDKIRHASETVFKQMNLRHLSRIDFFLTEDNEIYLNEVNTFPGMTPISMFPKMLQNNGHKFHEFLEDCINSAK.

The ATP-grasp domain occupies 120-326 (KLWYDALDIP…FHEFLEDCIN (207 aa)). An ATP-binding site is contributed by 150–205 (AFEKWGKVFVKAARQGSSVGCYSVAEKQAIAKAVNDAFGYSDQVLVEKAVKPRELE). Mg(2+) contacts are provided by aspartate 280, glutamate 293, and asparagine 295.

It belongs to the D-alanine--D-alanine ligase family. The cofactor is Mg(2+). Mn(2+) serves as cofactor.

It localises to the cytoplasm. The enzyme catalyses 2 D-alanine + ATP = D-alanyl-D-alanine + ADP + phosphate + H(+). It functions in the pathway cell wall biogenesis; peptidoglycan biosynthesis. In terms of biological role, cell wall formation. This is D-alanine--D-alanine ligase from Vibrio parahaemolyticus serotype O3:K6 (strain RIMD 2210633).